We begin with the raw amino-acid sequence, 491 residues long: Inositol-pentakisphosphate 2-kinase (491 aa).

The EXKPK motif signature appears at 136–140 (EIKPK). S282 is subject to Phosphoserine.

It belongs to the IPK1 type 2 family. In terms of tissue distribution, ubiquitously expressed, with high expression in heart, brain, testis and placenta.

It localises to the cytoplasm. The protein localises to the nucleus. It catalyses the reaction 1D-myo-inositol 1,3,4,5,6-pentakisphosphate + ATP = 1D-myo-inositol hexakisphosphate + ADP + H(+). Its function is as follows. Phosphorylates Ins(1,3,4,5,6)P5 at position 2 to form Ins(1,2,3,4,5,6)P6 (InsP6 or phytate). InsP6 is involved in many processes such as mRNA export, non-homologous end-joining, endocytosis, ion channel regulation. It also protects cells from TNF-alpha-induced apoptosis. In Homo sapiens (Human), this protein is Inositol-pentakisphosphate 2-kinase (IPPK).